The chain runs to 194 residues: Large ribosomal subunit protein eL15 (194 aa).

The interval 165-194 (AGKKGRGLMNKGKGAEKVRPGIRANKKLGK) is disordered.

It belongs to the eukaryotic ribosomal protein eL15 family.

The chain is Large ribosomal subunit protein eL15 from Methanococcus aeolicus (strain ATCC BAA-1280 / DSM 17508 / OCM 812 / Nankai-3).